The following is a 93-amino-acid chain: Large ribosomal subunit protein uL23cz/uL23cy (93 aa).

Belongs to the universal ribosomal protein uL23 family. As to quaternary structure, part of the 50S ribosomal subunit.

The protein resides in the plastid. It is found in the chloroplast. Its function is as follows. Binds to 23S rRNA. This is Large ribosomal subunit protein uL23cz/uL23cy (rpl23-A) from Citrus sinensis (Sweet orange).